Reading from the N-terminus, the 547-residue chain is Alpha-1,3-mannosyl-glycoprotein 4-beta-N-acetylglucosaminyltransferase B (547 aa).

Topologically, residues methionine 1–threonine 7 are cytoplasmic. Residues phenylalanine 8–phenylalanine 28 form a helical; Signal-anchor for type II membrane protein membrane-spanning segment. At serine 29–glutamate 547 the chain is on the lumenal side. Residues valine 36–aspartate 83 are a coiled coil. Asparagine 85, asparagine 101, and asparagine 464 each carry an N-linked (GlcNAc...) asparagine glycan.

Belongs to the glycosyltransferase 54 family. Requires a divalent metal cation as cofactor. In terms of processing, N-glycosylated.

The protein resides in the golgi apparatus membrane. The catalysed reaction is N(4)-{beta-D-GlcNAc-(1-&gt;2)-alpha-D-Man-(1-&gt;3)-[beta-D-GlcNAc-(1-&gt;2)-alpha-D-Man-(1-&gt;6)]-beta-D-Man-(1-&gt;4)-beta-D-GlcNAc-(1-&gt;4)-beta-D-GlcNAc}-L-asparaginyl-[protein] + UDP-N-acetyl-alpha-D-glucosamine = N(4)-{beta-D-GlcNAc-(1-&gt;2)-[beta-D-GlcNAc-(1-&gt;4)]-alpha-D-Man-(1-&gt;3)-[beta-D-GlcNAc-(1-&gt;2)-alpha-D-Man-(1-&gt;6)]-beta-D-Man-(1-&gt;4)-beta-D-GlcNAc-(1-&gt;4)-beta-D-GlcNAc}-L-asparaginyl-[protein] + UDP + H(+). It catalyses the reaction an N(4)-{beta-D-GlcNAc-(1-&gt;2)-alpha-D-Man-(1-&gt;3)-[alpha-D-Man-(1-&gt;6)]-beta-D-Man-(1-&gt;4)-beta-D-GlcNAc-(1-&gt;4)-beta-D-GlcNAc}-L-asparaginyl-[protein] + UDP-N-acetyl-alpha-D-glucosamine = an N(4)-{beta-D-GlcNAc-(1-&gt;2)-[beta-D-GlcNAc-(1-&gt;4)]-alpha-D-Man-(1-&gt;3)-[alpha-D-Man-(1-&gt;6)]-beta-D-Man-(1-&gt;4)-beta-D-GlcNAc-(1-&gt;4)-beta-D-GlcNAc}-L-asparaginyl-[protein] + UDP + H(+). The enzyme catalyses an N(4)-{beta-D-GlcNAc-(1-&gt;2)-alpha-D-Man-(1-&gt;3)-[beta-D-GlcNAc-(1-&gt;2)-[beta-D-GlcNAc-(1-&gt;6)]-alpha-D-Man-(1-&gt;6)]-beta-D-Man-(1-&gt;4)-beta-D-GlcNAc-(1-&gt;4)-beta-D-GlcNAc}-L-asparaginyl-[protein] + UDP-N-acetyl-alpha-D-glucosamine = an N(4)-{beta-D-GlcNAc-(1-&gt;2)-[beta-D-GlcNAc-(1-&gt;4)]-alpha-D-Man-(1-&gt;3)-[beta-D-GlcNAc-(1-&gt;2)-[beta-D-GlcNAc-(1-&gt;6)]-alpha-D-Man-(1-&gt;6)]-beta-D-Man-(1-&gt;4)-beta-D-GlcNAc-(1-&gt;4)-beta-D-GlcNAc}-L-asparaginyl-[protein] + UDP + H(+). It carries out the reaction an N(4)-{beta-D-GlcNAc-(1-&gt;2)-alpha-D-Man-(1-&gt;3)-[beta-D-GlcNAc-(1-&gt;2)-alpha-D-Man-(1-&gt;6)]-beta-D-Man-(1-&gt;4)-beta-D-GlcNAc-(1-&gt;4)-[alpha-L-Fuc-(1-&gt;6)]-beta-D-GlcNAc}-L-asparaginyl-[protein] + UDP-N-acetyl-alpha-D-glucosamine = N(4)-{beta-D-GlcNAc-(1-&gt;2)-[beta-D-GlcNAc-(1-&gt;4)]-alpha-D-Man-(1-&gt;3)-[beta-D-GlcNAc-(1-&gt;2)-alpha-D-Man-(1-&gt;6)]-beta-D-Man-(1-&gt;4)-beta-D-GlcNAc-(1-&gt;4)-[alpha-L-Fuc-(1-&gt;6)]-beta-D-GlcNAc}-asparaginyl-[protein] + UDP + H(+). The catalysed reaction is an N(4)-{beta-D-GlcNAc-(1-&gt;2)-alpha-D-Man-(1-&gt;3)-[beta-D-Gal-(1-&gt;4)-beta-D-GlcNAc-(1-&gt;2)-alpha-D-Man-(1-&gt;6)]-beta-D-Man-(1-&gt;4)-beta-D-GlcNAc-(1-&gt;4)-beta-D-GlcNAc}-L-asparaginyl-[protein] + UDP-N-acetyl-alpha-D-glucosamine = an N(4)-{beta-D-GlcNAc-(1-&gt;2)-[beta-D-GlcNAc-(1-&gt;4)]-alpha-D-Man-(1-&gt;3)-[beta-D-Gal-(1-&gt;4)-beta-D-GlcNAc-(1-&gt;2)-alpha-D-Man-(1-&gt;6)]-beta-D-Man-(1-&gt;4)-beta-D-GlcNAc-(1-&gt;4)-beta-D-GlcNAc}-L-asparaginyl-[protein] + UDP + H(+). It catalyses the reaction N(4)-{beta-D-GlcNAc-(1-&gt;2)-alpha-D-Man-(1-&gt;3)-[alpha-D-Man-(1-&gt;3)-{alpha-D-Man-(1-&gt;6)}-alpha-D-Man-(1-&gt;6)]-beta-D-Man-(1-&gt;4)-beta-D-GlcNAc-(1-&gt;4)-beta-D-GlcNAc}-asparaginyl-[protein] + UDP-N-acetyl-alpha-D-glucosamine = N(4)-{beta-D-GlcNAc-(1-&gt;2)-[beta-D-GlcNAc-(1-&gt;4)]-alpha-D-Man-(1-&gt;3)-[alpha-D-Man-(1-&gt;3)-{alpha-D-Man-(1-&gt;6)}-alpha-D-Man-(1-&gt;6)]-beta-D-Man-(1-&gt;4)-beta-D-GlcNAc-(1-&gt;4)-beta-D-GlcNAc}-asparaginyl-[protein] + UDP + H(+). The enzyme catalyses N(4)-{beta-D-GlcNAc-(1-&gt;2)-alpha-D-Man-(1-&gt;3)-beta-D-Man-(1-&gt;4)-beta-D-GlcNAc-(1-&gt;4)-beta-D-GlcNAc}-asparaginyl-[protein] + UDP-N-acetyl-alpha-D-glucosamine = N(4)-{beta-D-GlcNAc-(1-&gt;2)-[beta-D-GlcNAc-(1-&gt;4)]-alpha-D-Man-(1-&gt;3)-beta-D-Man-(1-&gt;4)-beta-D-GlcNAc-(1-&gt;4)-beta-D-GlcNAc}-asparaginyl-[protein] + UDP + H(+). It participates in protein modification; protein glycosylation. In terms of biological role, glycosyltransferase that catalyze the transfer of GlcNAc from UDP-GlcNAc to the GlcNAcbeta1-2Manalpha1-3 arm of the core structure of N-linked glycans through a beta1-4 linkage and participates in the production of tri- and tetra-antennary N-linked sugar chains. Prefers complex-type N-glycans over hybrid-types. Has lower affinities for donors or acceptors than MGAT4A, suggesting that, under physiological conditions, it is not the main contributor in N-glycan biosynthesis. This Danio rerio (Zebrafish) protein is Alpha-1,3-mannosyl-glycoprotein 4-beta-N-acetylglucosaminyltransferase B (mgat4bQ9UQ53).